Reading from the N-terminus, the 430-residue chain is Tol-Pal system protein TolB (430 aa).

Positions Met1–Ala21 are cleaved as a signal peptide.

The protein belongs to the TolB family. In terms of assembly, the Tol-Pal system is composed of five core proteins: the inner membrane proteins TolA, TolQ and TolR, the periplasmic protein TolB and the outer membrane protein Pal. They form a network linking the inner and outer membranes and the peptidoglycan layer.

Its subcellular location is the periplasm. Its function is as follows. Part of the Tol-Pal system, which plays a role in outer membrane invagination during cell division and is important for maintaining outer membrane integrity. TolB occupies a key intermediary position in the Tol-Pal system because it communicates directly with both membrane-embedded components, Pal in the outer membrane and TolA in the inner membrane. The chain is Tol-Pal system protein TolB from Escherichia coli O139:H28 (strain E24377A / ETEC).